Reading from the N-terminus, the 97-residue chain is Conotoxin Cal6.1b (97 aa).

The signal sequence occupies residues 1 to 22 (MKLTTVLVVALLVLAACQFTVT). Residues 22–46 (TDNSGDDPENPSLRSAGENQNPDST) form a disordered region. The propeptide occupies 23–68 (DNSGDDPENPSLRSAGENQNPDSTKTITAWATRDMTNMRRGLNRPS). 3 cysteine pairs are disulfide-bonded: C71–C87, C78–C91, and C86–C96.

The protein belongs to the conotoxin O1 superfamily. As to expression, expressed by the venom duct.

Its subcellular location is the secreted. Its function is as follows. Probable neurotoxin with unknown target. Possibly targets ion channels. In Californiconus californicus (California cone), this protein is Conotoxin Cal6.1b.